The following is a 174-amino-acid chain: Heat shock protein 22 (174 aa).

One can recognise a sHSP domain in the interval 44 to 154; the sequence is QIARWQEQEF…TLKEREVTIE (111 aa). Thr-152 bears the Phosphothreonine mark. The disordered stretch occupies residues 152–174; it reads TIEQTGEPAKKSAEEPNDKAASQ. Over residues 159-174 the composition is skewed to basic and acidic residues; the sequence is PAKKSAEEPNDKAASQ.

The protein belongs to the small heat shock protein (HSP20) family.

The chain is Heat shock protein 22 (Hsp22) from Drosophila melanogaster (Fruit fly).